The chain runs to 434 residues: MSRLSKEEISERLLELIKDETKPAIGCTEPVAVAFTVATGKKYMAGEVLKIDLKVSKNILKNGKSVTIPNTEVCGLDIAGALGEICGDPEEGLFVFRNVNNEYLDKAKEMIKNKVVTLNPIENTDPVFVEATLKGEQDEVIAILKGGHTNIEKVIVNGKIAFEKDNKNKKDNKDCDFIKELSLKDIRQITEDISIEKLDFIMDGIEMNKEAAKEGLKRQKGLTLGSSLLKLQEEGKIGKDSATIARILTAAGSDLRMGGGMCPIMTSGGSGNQGLCVILPINVVAEDIKAPKERLQRAVFFGHAVNNFVKKYTGKLSAICGCAIAAGIGATAGIAWLLGGKDKEIEGAILNMLANLTGMVCDGAKGSCAIKLSTSASEAVISAYLALNDIIVPNNTGIIGNTVEDTINNLGMLCKDGFYKADDVMLSIACKEVI.

This sequence belongs to the UPF0597 family.

The polypeptide is UPF0597 protein CLB_1949 (Clostridium botulinum (strain ATCC 19397 / Type A)).